The sequence spans 60 residues: DNA gyrase inhibitor YacG (60 aa).

Residues Cys-15, Cys-18, Cys-30, and Cys-34 each contribute to the Zn(2+) site.

Belongs to the DNA gyrase inhibitor YacG family. As to quaternary structure, interacts with GyrB. Zn(2+) serves as cofactor.

In terms of biological role, inhibits all the catalytic activities of DNA gyrase by preventing its interaction with DNA. Acts by binding directly to the C-terminal domain of GyrB, which probably disrupts DNA binding by the gyrase. The sequence is that of DNA gyrase inhibitor YacG from Nitrobacter hamburgensis (strain DSM 10229 / NCIMB 13809 / X14).